Reading from the N-terminus, the 631-residue chain is RNA polymerase sigma factor RpoD (631 aa).

The segment at 395-465 is sigma-70 factor domain-2; it reads LIKANLRLVV…TRSISDQART (71 aa). Residues 419 to 422 carry the Interaction with polymerase core subunit RpoC motif; the sequence is DLVQ. A sigma-70 factor domain-3 region spans residues 474-550; the sequence is EQINRLNRET…DKAIKNPANH (77 aa). The sigma-70 factor domain-4 stretch occupies residues 563-616; that stretch reads ILGTLPEREQEVVKMRFGLEDGYSLTLEEVGLHFNVTRERIRQIESKALRRLKN. A DNA-binding region (H-T-H motif) is located at residues 589–608; sequence LEEVGLHFNVTRERIRQIES.

This sequence belongs to the sigma-70 factor family. RpoD/SigA subfamily. In terms of assembly, interacts transiently with the RNA polymerase catalytic core.

Its subcellular location is the cytoplasm. Sigma factors are initiation factors that promote the attachment of RNA polymerase to specific initiation sites and are then released. This sigma factor is the primary sigma factor during exponential growth. The chain is RNA polymerase sigma factor RpoD from Borreliella burgdorferi (strain ATCC 35210 / DSM 4680 / CIP 102532 / B31) (Borrelia burgdorferi).